A 415-amino-acid chain; its full sequence is MKVEEHVPLIQESRKRKCQSSENASKRQQLLSKLPLRLHTGNENVDLSPLVSAIRKAKRIVVVTGAGISCDAGIPDFRSSEGLFSSLRAEYKLNCSGKELFDGSVYRDLKSVNIFHAMIRKLHMLSNNARPTDFHLFLSQLAQESKLLRLYTQNIDFLETRLEGLQTCIPLPQSAPWPTTIPLHGTLEVVSCTRCSFLKKFNPDIFDRNGVTVCPDCKTENEVRRIAGKRSVIEGCLRPRIVLYNEIHPDSESIGSVCSQDLKSRPDCLIVAGTSCKIPGVKRIIKEMSNCVHKQKGNVIWLNYDEPTKDFLNLCDLVVQGDLQIAIRRLKPLLDAPSWKLKSHSAKRTSKQKSSEQTKITSSTKITKAIGLNTKSNDSSKKDNTSFQLHQVLNSIEIPKVEIKQEVEYATPSPL.

The disordered stretch occupies residues 1 to 26 (MKVEEHVPLIQESRKRKCQSSENASK). The region spanning 40 to 337 (TGNENVDLSP…RRLKPLLDAP (298 aa)) is the Deacetylase sirtuin-type domain. NAD(+) contacts are provided by residues 65-84 (GAGI…EGLF) and 153-156 (QNID). H184 serves as the catalytic Proton acceptor. Residues C192, C195, C214, and C217 each coordinate Zn(2+). Residues 273–275 (GTS), 303–305 (NYD), and L323 contribute to the NAD(+) site.

It belongs to the sirtuin family. Class I subfamily. Zn(2+) is required as a cofactor.

Its subcellular location is the nucleus. It localises to the nucleolus. It catalyses the reaction N(6)-acetyl-L-lysyl-[protein] + NAD(+) + H2O = 2''-O-acetyl-ADP-D-ribose + nicotinamide + L-lysyl-[protein]. NAD-dependent histone deacetylase, which contributes to both telomeric and centromeric silencing, proper cell cycle progression, DNA damage control, recombination, and genomic maintenance. The chain is NAD-dependent protein deacetylase hst4 (hst4) from Schizosaccharomyces pombe (strain 972 / ATCC 24843) (Fission yeast).